We begin with the raw amino-acid sequence, 260 residues long: Phosphate import ATP-binding protein PstB 5 (260 aa).

One can recognise an ABC transporter domain in the interval isoleucine 9–valine 255. Glycine 41–serine 48 contacts ATP.

The protein belongs to the ABC transporter superfamily. Phosphate importer (TC 3.A.1.7) family. As to quaternary structure, the complex is composed of two ATP-binding proteins (PstB), two transmembrane proteins (PstC and PstA) and a solute-binding protein (PstS).

The protein localises to the cell inner membrane. It catalyses the reaction phosphate(out) + ATP + H2O = ADP + 2 phosphate(in) + H(+). Part of the ABC transporter complex PstSACB involved in phosphate import. Responsible for energy coupling to the transport system. The polypeptide is Phosphate import ATP-binding protein PstB 5 (Trichormus variabilis (strain ATCC 29413 / PCC 7937) (Anabaena variabilis)).